Here is a 305-residue protein sequence, read N- to C-terminus: MNLFSNGVDVGRRRQAFKAALAAPHIARLPGAFSPLIARSIEEAGFEGVYVSGAVIAADLALPDIGLTTLTEVAHRARQIARVTDLGVLVDADTGFGEPMSAARTVAELEDAGVAGCHLEDQVNPKRCGHLDGKEVVRTDVMVRRIAAAVSARRDPNFVICARTDAAGVEGIDAAIERAKAYLDAGADMIFTEALHSEADFRYFRHAIPDALLLANMTEFGKTTLLSADVLEEIGYNAVIYPVTTLRIAMGQVEQALAEIKEHGTQEGWLDRMQHRSRLYELLRYEDYNVFDQHIFTYRKGENNE.

Substrate is bound at residue 52–54 (SGA). The Mg(2+) site is built by D91 and D93. Substrate is bound by residues 128–129 (CG), R163, E193, 216–218 (NMT), R247, and R276.

The protein belongs to the isocitrate lyase/PEP mutase superfamily. Methylisocitrate lyase family. As to quaternary structure, homotetramer; dimer of dimers. Mg(2+) is required as a cofactor.

The catalysed reaction is (2S,3R)-3-hydroxybutane-1,2,3-tricarboxylate = pyruvate + succinate. Catalyzes the thermodynamically favored C-C bond cleavage of (2R,3S)-2-methylisocitrate to yield pyruvate and succinate via an alpha-carboxy-carbanion intermediate. The chain is Probable 2-methylisocitrate lyase 1 from Corynebacterium glutamicum (strain ATCC 13032 / DSM 20300 / JCM 1318 / BCRC 11384 / CCUG 27702 / LMG 3730 / NBRC 12168 / NCIMB 10025 / NRRL B-2784 / 534).